The chain runs to 712 residues: MVQKNEHQGGQSQHSLFAAGPTGEERRRVQWLTAELERHNHLYHTLDRPEISDDQFDALFRELQDLETRWPELRSLHSPTLRVGGGLLEGLAKKAHSLQMYGLDNVFSAGQWQEFAERMARAWGGDVNGPLPESFWCDPKLDGLALEIIYADGVLQEALTRGDGEVGEVVTDAVRTIRTVPLRLAGPGPFPARLEVRGEVVMYKNDFAVLNEKQEALGLKTFANPRNAAAGTLRQLDTAIIGSRPLRFLAYSLGQALWTPAPVCLLQSEVMSRLREYGFLTPPDGRLCSSVAEVEEYAQWVREHRAAFPMEIDGAVAKLDNLEAQQALGFTARAPRFAVAFKFPAELAQTLLKDIEIQVGRTGVLTPVAMLEPVSVGGVMVSRATLHNEDEIRNRDVRVGDTVMVRRAGDVIPEVVGPVLEKRPENAREYVFPHTCPACGQPAYREEGEAAWRCENMACSAIRLRAITHFVSKAGLDIAGVGQKWIEQLVTSGRVQSPADLFTLTVQELLGFERMGEVLAHKFVDALARAVHSATLPRLISALGIRHVGEQTARTLALHFETLDELENAGAETLLSLPDVGPEVASSIHNFFNSPANREQLERFRALGLWPRGGRSGGGSSGSTGEGGLASGPLAGKNILFTGTLSMPRSEAEKLAETAGATPLGGVSKKLDYLVAGEKAGSKLEKAQALGVTVLTEEEFMTMLREAKAASE.

Residues 1-22 (MVQKNEHQGGQSQHSLFAAGPT) are disordered. Residues 53-57 (DDQFD) and Asp138 contribute to the NAD(+) site. Lys140 (N6-AMP-lysine intermediate) is an active-site residue. Arg161, Glu199, Lys318, and Lys342 together coordinate NAD(+). Positions 436, 439, 454, and 459 each coordinate Zn(2+). The tract at residues 612-631 (RGGRSGGGSSGSTGEGGLAS) is disordered. Over residues 614-630 (GRSGGGSSGSTGEGGLA) the composition is skewed to gly residues. One can recognise a BRCT domain in the interval 629–712 (LASGPLAGKN…MLREAKAASE (84 aa)).

This sequence belongs to the NAD-dependent DNA ligase family. LigA subfamily. Requires Mg(2+) as cofactor. Mn(2+) serves as cofactor.

It catalyses the reaction NAD(+) + (deoxyribonucleotide)n-3'-hydroxyl + 5'-phospho-(deoxyribonucleotide)m = (deoxyribonucleotide)n+m + AMP + beta-nicotinamide D-nucleotide.. DNA ligase that catalyzes the formation of phosphodiester linkages between 5'-phosphoryl and 3'-hydroxyl groups in double-stranded DNA using NAD as a coenzyme and as the energy source for the reaction. It is essential for DNA replication and repair of damaged DNA. The polypeptide is DNA ligase (Desulfovibrio desulfuricans (strain ATCC 27774 / DSM 6949 / MB)).